The sequence spans 592 residues: V-type ATP synthase alpha chain (592 aa).

Glycine 232–threonine 239 provides a ligand contact to ATP.

Belongs to the ATPase alpha/beta chains family.

It catalyses the reaction ATP + H2O + 4 H(+)(in) = ADP + phosphate + 5 H(+)(out). Produces ATP from ADP in the presence of a proton gradient across the membrane. The V-type alpha chain is a catalytic subunit. This Clostridium botulinum (strain Alaska E43 / Type E3) protein is V-type ATP synthase alpha chain.